Reading from the N-terminus, the 492-residue chain is Catalase isozyme 3 (492 aa).

Catalysis depends on residues H65 and N138. Y348 is a heme binding site.

The protein belongs to the catalase family. As to quaternary structure, homotetramer. Heme is required as a cofactor.

It is found in the peroxisome. It catalyses the reaction 2 H2O2 = O2 + 2 H2O. Occurs in almost all aerobically respiring organisms and serves to protect cells from the toxic effects of hydrogen peroxide. This chain is Catalase isozyme 3 (CAT3), found in Nicotiana plumbaginifolia (Leadwort-leaved tobacco).